The primary structure comprises 579 residues: Membrane protein insertase YidC (579 aa).

A helical membrane pass occupies residues 10 to 30; that stretch reads LVIVTILSALILFGWSFVTKH. The segment at 35–61 is disordered; the sequence is PPAPTQQGKNQPKAELTAEESGDKPLK. 5 helical membrane passes run 330 to 350, 351 to 371, 423 to 443, 478 to 498, and 523 to 543; these read FDKAIDWGWFAIIEKVFFYYL, DWLFLHVGNYGLAIILMVFTI, VNPFAGCLPMFIQFPIFIALY, LLHFTPPHFLMIGVLPIILGI, and PLISVIFMAPLAAGLQVYYIF. Basic and acidic residues predominate over residues 560-572; sequence STPEERQDRAERK. The segment at 560-579 is disordered; it reads STPEERQDRAERKRPSKKKA.

Belongs to the OXA1/ALB3/YidC family. Type 1 subfamily. Interacts with the Sec translocase complex via SecD. Specifically interacts with transmembrane segments of nascent integral membrane proteins during membrane integration.

It is found in the cell inner membrane. In terms of biological role, required for the insertion and/or proper folding and/or complex formation of integral membrane proteins into the membrane. Involved in integration of membrane proteins that insert both dependently and independently of the Sec translocase complex, as well as at least some lipoproteins. Aids folding of multispanning membrane proteins. This Zymomonas mobilis subsp. mobilis (strain ATCC 31821 / ZM4 / CP4) protein is Membrane protein insertase YidC.